The following is a 449-amino-acid chain: 23S rRNA (uracil(1939)-C(5))-methyltransferase RlmD (449 aa).

The TRAM domain maps to 1 to 66; the sequence is MGRSRHHNKL…AKFDEAKVVE (66 aa). Positions 79, 85, 88, and 169 each coordinate [4Fe-4S] cluster. S-adenosyl-L-methionine is bound by residues Q280, F309, N314, E330, N357, and D379. C405 functions as the Nucleophile in the catalytic mechanism.

It belongs to the class I-like SAM-binding methyltransferase superfamily. RNA M5U methyltransferase family. RlmD subfamily.

The catalysed reaction is uridine(1939) in 23S rRNA + S-adenosyl-L-methionine = 5-methyluridine(1939) in 23S rRNA + S-adenosyl-L-homocysteine + H(+). Catalyzes the formation of 5-methyl-uridine at position 1939 (m5U1939) in 23S rRNA. In Francisella tularensis subsp. tularensis (strain FSC 198), this protein is 23S rRNA (uracil(1939)-C(5))-methyltransferase RlmD.